The sequence spans 521 residues: CD166 antigen (521 aa).

The Extracellular portion of the chain corresponds to Gly1–Lys465. Asn29, Asn33, Asn105, Asn203, Asn244, Asn299, Asn395, Asn418, and Asn437 each carry an N-linked (GlcNAc...) asparagine glycan. The region spanning Pro63–His172 is the Ig-like V-type 2 domain. Cys95 and Cys158 are oxidised to a cystine. Ig-like C2-type domains lie at Pro183–Thr266, Asp271–Thr347, and Pro354–Ser439. 3 cysteine pairs are disulfide-bonded: Cys208-Cys251, Cys292-Cys330, and Cys373-Cys423. A helical membrane pass occupies residues Leu466–Leu487. The Cytoplasmic portion of the chain corresponds to Tyr488–Ala521. A disordered region spans residues Asn500–Ala521. The segment covering Glu507 to Ala521 has biased composition (basic and acidic residues).

As to quaternary structure, homodimer. Interacts (via extracellular domain) with CD6 (via extracellular domain). Homodimerization and interaction with CD6 involve the same region and cannot occur simultaneously. The affinity for CD6 is much higher than the affinity for self-association. Interacts (via glycosylated extracellular domain) with LGALS1 and LGALS3. Interaction with LGALS1 or LGALS3 inhibits interaction with CD6. Glycosylated.

Its subcellular location is the cell membrane. It localises to the cell projection. It is found in the axon. The protein localises to the dendrite. Cell adhesion molecule that mediates both heterotypic cell-cell contacts via its interaction with CD6, as well as homotypic cell-cell contacts. Promotes T-cell activation and proliferation via its interactions with CD6. Contributes to the formation and maturation of the immunological synapse via its interactions with CD6. Mediates homotypic interactions with cells that express ALCAM. Mediates attachment of dendritic cells onto endothelial cells via homotypic interaction. Inhibits endothelial cell migration and promotes endothelial tube formation via homotypic interactions. Required for normal organization of the lymph vessel network. Required for normal hematopoietic stem cell engraftment in the bone marrow. Plays a role in hematopoiesis; required for normal numbers of hematopoietic stem cells in bone marrow. Promotes in vitro osteoblast proliferation and differentiation. Promotes neurite extension, axon growth and axon guidance; axons grow preferentially on surfaces that contain ALCAM. Mediates outgrowth and pathfinding for retinal ganglion cell axons. In Oryctolagus cuniculus (Rabbit), this protein is CD166 antigen (ALCAM).